The sequence spans 361 residues: Peptide chain release factor 1 (361 aa).

Glutamine 238 carries the post-translational modification N5-methylglutamine.

It belongs to the prokaryotic/mitochondrial release factor family. In terms of processing, methylated by PrmC. Methylation increases the termination efficiency of RF1.

The protein resides in the cytoplasm. Functionally, peptide chain release factor 1 directs the termination of translation in response to the peptide chain termination codons UAG and UAA. This Mesomycoplasma hyopneumoniae (strain 7448) (Mycoplasma hyopneumoniae) protein is Peptide chain release factor 1.